A 302-amino-acid chain; its full sequence is 4-hydroxy-tetrahydrodipicolinate synthase (302 aa).

Pyruvate is bound at residue Thr-49. Residue Tyr-137 is the Proton donor/acceptor of the active site. Residue Lys-166 is the Schiff-base intermediate with substrate of the active site. Ile-208 contributes to the pyruvate binding site.

The protein belongs to the DapA family. Homotetramer; dimer of dimers.

Its subcellular location is the cytoplasm. It carries out the reaction L-aspartate 4-semialdehyde + pyruvate = (2S,4S)-4-hydroxy-2,3,4,5-tetrahydrodipicolinate + H2O + H(+). Its pathway is amino-acid biosynthesis; L-lysine biosynthesis via DAP pathway; (S)-tetrahydrodipicolinate from L-aspartate: step 3/4. Its function is as follows. Catalyzes the condensation of (S)-aspartate-beta-semialdehyde [(S)-ASA] and pyruvate to 4-hydroxy-tetrahydrodipicolinate (HTPA). The protein is 4-hydroxy-tetrahydrodipicolinate synthase of Chloroherpeton thalassium (strain ATCC 35110 / GB-78).